The primary structure comprises 579 residues: Zinc finger-containing ubiquitin peptidase 1 (579 aa).

The C2H2-type 1 zinc finger occupies 2-25; it reads LSCDICGETVSSEPDMKAHLLIVH. The segment at 30 to 53 adopts a C2H2-type 2; atypical zinc-finger fold; that stretch reads VICPFCKLSGVNYDEMCFHIETAH. C2H2-type zinc fingers lie at residues 155-178 and 194-216; these read PECP…KTKH and YDCP…VDLH. The interval 227-249 is MIU; sequence NRVQCSRDLELAQQLQQEEDRKR. Positions 250–275 are zUBD/ZHA; it reads RSEESRQEMEEFQKLQRQYGLDNSGG. An N6-acetyllysine modification is found at Lys263. The active-site Nucleophile is the Cys361. His492 (proton acceptor) is an active-site residue. Asp513 is an active-site residue.

It belongs to the peptidase C78 family. ZUFSP subfamily. Interacts with RPA1 and RPA2.

The protein localises to the cytoplasm. It localises to the nucleus. It carries out the reaction Thiol-dependent hydrolysis of ester, thioester, amide, peptide and isopeptide bonds formed by the C-terminal Gly of ubiquitin (a 76-residue protein attached to proteins as an intracellular targeting signal).. Functionally, deubiquitinase with endodeubiquitinase activity that specifically interacts with and cleaves 'Lys-63'-linked long polyubiquitin chains. Shows only weak activity against 'Lys-11' and 'Lys-48'-linked chains. Plays an important role in genome stability pathways, functioning to prevent spontaneous DNA damage and also promote cellular survival in response to exogenous DNA damage. Modulates the ubiquitination status of replication protein A (RPA) complex proteins in response to replication stress. The protein is Zinc finger-containing ubiquitin peptidase 1 of Bos taurus (Bovine).